Here is a 1238-residue protein sequence, read N- to C-terminus: Protein MMS22-like (1238 aa).

This sequence belongs to the MMS22 family. MMS22L subfamily. In terms of assembly, component of the MMS22L-TONSL complex, a complex at least composed of MMS22L and TONSL/NFKBIL2. Interacts with RAD51; interaction is direct. Degraded by the ubiquitin-proteasome system upon replication stress.

Its subcellular location is the nucleus. It is found in the chromosome. In terms of biological role, component of the MMS22L-TONSL complex, a complex that promotes homologous recombination-mediated repair of double-strand breaks (DSBs) at stalled or collapsed replication forks. The MMS22L-TONSL complex is required to maintain genome integrity during DNA replication. It mediates the assembly of RAD51 filaments on single-stranded DNA (ssDNA): the MMS22L-TONSL complex is recruited to DSBs following histone replacement by histone chaperones and eviction of the replication protein A complex (RPA/RP-A) from DSBs. Following recruitment to DSBs, the TONSL-MMS22L complex promotes recruitment of RAD51 filaments and subsequent homologous recombination. Within the complex, MMS22L acts by binding ssDNA. This chain is Protein MMS22-like (Mms22l), found in Mus musculus (Mouse).